We begin with the raw amino-acid sequence, 82 residues long: Small ribosomal subunit protein uS17 (82 aa).

It belongs to the universal ribosomal protein uS17 family. Part of the 30S ribosomal subunit.

Functionally, one of the primary rRNA binding proteins, it binds specifically to the 5'-end of 16S ribosomal RNA. The chain is Small ribosomal subunit protein uS17 from Shewanella denitrificans (strain OS217 / ATCC BAA-1090 / DSM 15013).